A 335-amino-acid polypeptide reads, in one-letter code: Expansin-like protein 3 (335 aa).

The first 20 residues, 1 to 20, serve as a signal peptide directing secretion; sequence MKFNTIFLVLSIVKFILISA. Over 21–314 the chain is Extracellular; it reads QSCPFSQSII…LNENENIESN (294 aa). The region spanning 43–143 is the Expansin-like EG45 domain; the sequence is AGNCGFEKLN…VKVPCEVSGN (101 aa). Cystine bridges form between cysteine 46/cysteine 76 and cysteine 79/cysteine 138. An N-linked (GlcNAc...) asparagine glycan is attached at asparagine 87. The disordered stretch occupies residues 247–276; the sequence is YKPQTFNSQQTSNNQNSNTQTPTKQPSPNS. Positions 249–272 are enriched in low complexity; sequence PQTFNSQQTSNNQNSNTQTPTKQP. Residues 315-335 traverse the membrane as a helical segment; that stretch reads SLKLLPNFLLLILIILLNINF.

The protein belongs to the expansin family. Expansin A subfamily.

Its subcellular location is the membrane. May serve to lubricate the movement of the cellulose microfibrils during cell growth and wall extension and/or may serve to maintain the fluid state of the slug cell wall. This is Expansin-like protein 3 (expl3) from Dictyostelium discoideum (Social amoeba).